The sequence spans 162 residues: 18.5 kDa class IV heat shock protein (162 aa).

The sHSP domain occupies 53 to 149; sequence TSSSTVNTQL…PPQLPEIEEN (97 aa).

Belongs to the small heat shock protein (HSP20) family. In terms of assembly, may form oligomeric structures.

The protein resides in the cytoplasm. This is 18.5 kDa class IV heat shock protein (HSP18.5) from Arabidopsis thaliana (Mouse-ear cress).